The following is a 1400-amino-acid chain: DNA-directed RNA polymerase subunit beta' (1400 aa).

The Zn(2+) site is built by Cys70, Cys72, Cys85, and Cys88. Residues Asp460, Asp462, and Asp464 each contribute to the Mg(2+) site. The Zn(2+) site is built by Cys814, Cys887, Cys894, and Cys897.

The protein belongs to the RNA polymerase beta' chain family. In terms of assembly, the RNAP catalytic core consists of 2 alpha, 1 beta, 1 beta' and 1 omega subunit. When a sigma factor is associated with the core the holoenzyme is formed, which can initiate transcription. The cofactor is Mg(2+). It depends on Zn(2+) as a cofactor.

It carries out the reaction RNA(n) + a ribonucleoside 5'-triphosphate = RNA(n+1) + diphosphate. DNA-dependent RNA polymerase catalyzes the transcription of DNA into RNA using the four ribonucleoside triphosphates as substrates. The sequence is that of DNA-directed RNA polymerase subunit beta' from Marinomonas sp. (strain MWYL1).